A 218-amino-acid chain; its full sequence is Small ribosomal subunit protein uS5 (218 aa).

One can recognise an S5 DRBM domain in the interval 55 to 118 (LDHEVIDVSI…RNAKLNIIPV (64 aa)).

This sequence belongs to the universal ribosomal protein uS5 family. In terms of assembly, part of the 30S ribosomal subunit. Contacts protein S4.

With S4 and S12 plays an important role in translational accuracy. This chain is Small ribosomal subunit protein uS5, found in Aeropyrum pernix (strain ATCC 700893 / DSM 11879 / JCM 9820 / NBRC 100138 / K1).